Here is a 39-residue protein sequence, read N- to C-terminus: MLNIQPTQSIVNNQPKSDQKKQKPADLLKEFYDKTGNRN.

Positions 1-16 (MLNIQPTQSIVNNQPK) are enriched in polar residues. A disordered region spans residues 1–39 (MLNIQPTQSIVNNQPKSDQKKQKPADLLKEFYDKTGNRN). The segment covering 17–39 (SDQKKQKPADLLKEFYDKTGNRN) has biased composition (basic and acidic residues).

This is an uncharacterized protein from Dictyostelium discoideum (Social amoeba).